The sequence spans 413 residues: MGTFCSVVKFENLQELKRLCHWGPIIALGVIAICSAMAMIDSVLWYWPLHTTGGSVNFIMLINWTVMILYNYFNAMFVGPGFVPLGWKPENSQDSVYLQYCKVCQAYKAPRSHHCRKCNRCVMKMDHHCPWINNCCGYQNHASFTLFLLLAPLGCIHAAFIFVMTMYTQLYNRLSFGWNTVKIDMSAARRDPLPIIPFGLAAFAATLFALGLALGTTIAVGMLFFIQMKIILRNKTSIESWIEEKAKDRIQYYQLDEVFVFPYDMGSRWKNFKQVFTWSGVPEGDGLDWPIREGCHQYSLTIEQLKQKADKRVRSVRYKVIEDYSGTCCPLNRGIKTFFTSPCTEEPRIRLQKGEFILATRGLRYWLYGDKILDDSVLEGVSRIRGWFPRNCVEKCPCDAETDQAPEGEKKNR.

The Cytoplasmic portion of the chain corresponds to 1 to 24 (MGTFCSVVKFENLQELKRLCHWGP). A helical transmembrane segment spans residues 25-45 (IIALGVIAICSAMAMIDSVLW). Residues 46-57 (YWPLHTTGGSVN) are Lumenal-facing. The helical transmembrane segment at 58 to 78 (FIMLINWTVMILYNYFNAMFV) threads the bilayer. Residues 79 to 143 (GPGFVPLGWK…NCCGYQNHAS (65 aa)) are Cytoplasmic-facing. Residues 99-149 (QYCKVCQAYKAPRSHHCRKCNRCVMKMDHHCPWINNCCGYQNHASFTLFLL) form the DHHC domain. Cys129 functions as the S-palmitoyl cysteine intermediate in the catalytic mechanism. The helical transmembrane segment at 144–164 (FTLFLLLAPLGCIHAAFIFVM) threads the bilayer. Over 165-194 (TMYTQLYNRLSFGWNTVKIDMSAARRDPLP) the chain is Lumenal. A helical membrane pass occupies residues 195 to 215 (IIPFGLAAFAATLFALGLALG). Residues 216–413 (TTIAVGMLFF…QAPEGEKKNR (198 aa)) lie on the Cytoplasmic side of the membrane. The 86-residue stretch at 313–398 (VRSVRYKVIE…PRNCVEKCPC (86 aa)) folds into the SH3 domain. S-palmitoyl cysteine attachment occurs at residues Cys328, Cys329, and Cys343. The short motif at 410 to 413 (KKNR) is the Di-lysine motif element.

Belongs to the DHHC palmitoyltransferase family. Homooligomerizes. Interacts with SELENOK. In terms of processing, palmitoylated at 3 different sites by ZDHHC16. The combination of the different palmitoylation events strongly affects the quaternary assembly of ZDHHC6, its localization, stability and function. Palmitoylation at Cys-328 accelerates the turnover of ZDHHC6. Depalmitoylated by LYPLA2.

It localises to the endoplasmic reticulum membrane. The enzyme catalyses L-cysteinyl-[protein] + hexadecanoyl-CoA = S-hexadecanoyl-L-cysteinyl-[protein] + CoA. The catalysed reaction is L-cysteinyl-[protein] + octadecanoyl-CoA = S-octadecanoyl-L-cysteinyl-[protein] + CoA. Its function is as follows. Endoplasmic reticulum palmitoyl acyltransferase that mediates palmitoylation of proteins such as AMFR, CALX, ITPR1 and TFRC. Palmitoylates calnexin (CALX), which is required for its association with the ribosome-translocon complex and efficient folding of glycosylated proteins. Mediates palmitoylation of AMFR, promoting AMFR distribution to the peripheral endoplasmic reticulum. Together with SELENOK, palmitoylates ITPR1 in immune cells, leading to regulate ITPR1 stability and function. Stearoyltransferase that mediates stearoylation of TFRC to inhibit TFRC-mediated activation of the JNK pathway and mitochondrial fragmentation. This is Palmitoyltransferase ZDHHC6 from Bos taurus (Bovine).